A 420-amino-acid polypeptide reads, in one-letter code: Probable protein phosphatase 2C 73 (420 aa).

Residues 33-336 enclose the PPM-type phosphatase domain; it reads GVSMHTKQGW…DDCAVVCLFL (304 aa). Mn(2+) is bound by residues Asp69 and Gly70. The span at 96 to 105 shows a compositional bias: polar residues; sequence LKTEQDPSSN. The interval 96-119 is disordered; sequence LKTEQDPSSNTDKETLEKSDCTSL. Residues 106–115 show a composition bias toward basic and acidic residues; sequence TDKETLEKSD. Mn(2+)-binding residues include Asp281 and Asp327.

It belongs to the PP2C family. Mg(2+) serves as cofactor. Mn(2+) is required as a cofactor.

The enzyme catalyses O-phospho-L-seryl-[protein] + H2O = L-seryl-[protein] + phosphate. The catalysed reaction is O-phospho-L-threonyl-[protein] + H2O = L-threonyl-[protein] + phosphate. This Oryza sativa subsp. japonica (Rice) protein is Probable protein phosphatase 2C 73.